The sequence spans 177 residues: NADH-quinone oxidoreductase subunit B (177 aa).

[4Fe-4S] cluster-binding residues include Cys-56, Cys-57, Cys-121, and Cys-151.

The protein belongs to the complex I 20 kDa subunit family. In terms of assembly, NDH-1 is composed of 14 different subunits. Subunits NuoB, C, D, E, F, and G constitute the peripheral sector of the complex. Requires [4Fe-4S] cluster as cofactor.

The protein resides in the cell inner membrane. The enzyme catalyses a quinone + NADH + 5 H(+)(in) = a quinol + NAD(+) + 4 H(+)(out). In terms of biological role, NDH-1 shuttles electrons from NADH, via FMN and iron-sulfur (Fe-S) centers, to quinones in the respiratory chain. Couples the redox reaction to proton translocation (for every two electrons transferred, four hydrogen ions are translocated across the cytoplasmic membrane), and thus conserves the redox energy in a proton gradient. In Dinoroseobacter shibae (strain DSM 16493 / NCIMB 14021 / DFL 12), this protein is NADH-quinone oxidoreductase subunit B.